A 246-amino-acid chain; its full sequence is Small ribosomal subunit protein uS2 (246 aa).

Positions 225 to 246 (SKSSASVPNKDEYVAAEDGAAE) are disordered.

It belongs to the universal ribosomal protein uS2 family.

This chain is Small ribosomal subunit protein uS2, found in Cellvibrio japonicus (strain Ueda107) (Pseudomonas fluorescens subsp. cellulosa).